The following is a 262-amino-acid chain: Glutamate racemase (262 aa).

Substrate contacts are provided by residues 9 to 10 and 41 to 42; these read DS and YG. The active-site Proton donor/acceptor is the Cys-73. Residue 74-75 participates in substrate binding; sequence NT. Cys-180 functions as the Proton donor/acceptor in the catalytic mechanism. A substrate-binding site is contributed by 181–182; it reads TH.

This sequence belongs to the aspartate/glutamate racemases family.

The catalysed reaction is L-glutamate = D-glutamate. It participates in cell wall biogenesis; peptidoglycan biosynthesis. Functionally, provides the (R)-glutamate required for cell wall biosynthesis. This Aliivibrio fischeri (strain ATCC 700601 / ES114) (Vibrio fischeri) protein is Glutamate racemase.